Consider the following 477-residue polypeptide: Protein AC142 (477 aa).

Its subcellular location is the host cytoplasm. It is found in the host nucleus. It localises to the virion. Functionally, required for occlusion-derived virus (ODV) envelopment and subsequent embedding of virions into polyhedra. In Autographa californica nuclear polyhedrosis virus (AcMNPV), this protein is Protein AC142 (ORF142).